The following is a 1058-amino-acid chain: Ubiquitin-like modifier-activating enzyme 1 (1058 aa).

Residues 1–46 are disordered; sequence MSSSPLSKKRRVSGPDPKPGSNCSPAQSALSEVSSVPTNGMAKNGS. S2 carries the post-translational modification N-acetylserine. Residues S4, S13, S21, S24, and S46 each carry the phosphoserine modification. A compositionally biased stretch (polar residues) spans 21–38; the sequence is SNCSPAQSALSEVSSVPT. Y55 is modified (phosphotyrosine). A run of 2 repeats spans residues 63–199 and 459–611. Positions 63–611 are 2 approximate repeats; it reads GHEAMKMLQT…GTKGNVQVVI (549 aa). ATP is bound by residues A478, D504, R515, K528, and 576 to 577; that span reads DN. K528 is subject to N6-succinyllysine. The active-site Glycyl thioester intermediate is C632. The residue at position 671 (K671) is an N6-acetyllysine. Residue T800 is modified to Phosphothreonine. Phosphoserine is present on residues S810, S816, S820, and S835. K980 is modified (N6-acetyllysine).

This sequence belongs to the ubiquitin-activating E1 family. Monomer. Interacts with GAN (via BTB domain). In terms of processing, ISGylated. As to expression, ubiquitously expressed. In testis, expressed in A spermatogonia and spermatids but at very low levels in pachytene spermatocytes.

The protein resides in the cytoplasm. Its subcellular location is the mitochondrion. It is found in the nucleus. It catalyses the reaction ATP + ubiquitin + [E1 ubiquitin-activating enzyme]-L-cysteine = AMP + diphosphate + S-ubiquitinyl-[E1 ubiquitin-activating enzyme]-L-cysteine.. The protein operates within protein modification; protein ubiquitination. Its function is as follows. Catalyzes the first step in ubiquitin conjugation to mark cellular proteins for degradation through the ubiquitin-proteasome system. Activates ubiquitin by first adenylating its C-terminal glycine residue with ATP, and thereafter linking this residue to the side chain of a cysteine residue in E1, yielding a ubiquitin-E1 thioester and free AMP. Essential for the formation of radiation-induced foci, timely DNA repair and for response to replication stress. Promotes the recruitment of TP53BP1 and BRCA1 at DNA damage sites. The protein is Ubiquitin-like modifier-activating enzyme 1 (Uba1) of Mus musculus (Mouse).